The chain runs to 308 residues: Oligopeptide transport ATP-binding protein OppF (308 aa).

The ABC transporter domain maps to 9–254 (VEVKNVSLTF…PIHPYTQSLL (246 aa)). 46-53 (GESGSGKT) contributes to the ATP binding site.

The protein belongs to the ABC transporter superfamily. The complex is composed of two ATP-binding proteins (OppD and OppF), two transmembrane proteins (OppB and OppC) and a solute-binding protein (OppA).

Its subcellular location is the cell membrane. It catalyses the reaction a [peptide](out) + ATP + H2O = a [peptide](in) + ADP + phosphate + H(+). Part of the ABC transporter complex OppABCDF involved in the uptake of oligopeptides. Probably responsible for energy coupling to the transport system. The sequence is that of Oligopeptide transport ATP-binding protein OppF (oppF) from Streptococcus mutans serotype c (strain ATCC 700610 / UA159).